Reading from the N-terminus, the 161-residue chain is Bacterioferritin (161 aa).

The region spanning 1–145 (MKGDAKVIEF…TQISLYDRLG (145 aa)) is the Ferritin-like diiron domain. Fe cation-binding residues include glutamate 18 and glutamate 51. Residue methionine 52 coordinates heme b. The Fe cation site is built by histidine 54, glutamate 94, glutamate 127, and histidine 130.

It belongs to the bacterioferritin family. In terms of assembly, homooligomer of 24 subunits, arranged as 12 dimers, that are packed together to form an approximately spherical molecule with a central cavity, in which large amounts of iron can be deposited. Heme b serves as cofactor.

It catalyses the reaction 4 Fe(2+) + O2 + 4 H(+) = 4 Fe(3+) + 2 H2O. The enzyme catalyses Fe(2+)(in) = Fe(2+)(out). In terms of biological role, iron-storage protein, whose ferroxidase center binds Fe(2+), oxidizes it using dioxygen to Fe(3+), and participates in the subsequent Fe(3+) oxide mineral core formation within the central cavity of the BFR protein shell. This Rhodobacter capsulatus (Rhodopseudomonas capsulata) protein is Bacterioferritin (bfr).